The primary structure comprises 503 residues: uncharacterized protein (503 aa).

A helical transmembrane segment spans residues 26-46; the sequence is ILFLLLGLIILVNISINVATA. 4 disordered regions span residues 155 to 176, 311 to 381, 436 to 456, and 472 to 503; these read RPLS…MSQM, YDAR…ESHE, QISD…NPGG, and VQEN…GKLN. Composition is skewed to basic and acidic residues over residues 311-322 and 334-346; these read YDARDQWRRGTE and NPRE…DHNS. A compositionally biased stretch (polar residues) spans 348 to 367; that stretch reads AHRQNFSSHTHSQPNHSPPQ. Positions 493–503 are enriched in basic residues; it reads SLHRSRTGKLN.

It localises to the membrane. This is an uncharacterized protein from Mus musculus (Mouse).